A 1526-amino-acid chain; its full sequence is DNA topoisomerase 2-alpha (1526 aa).

At Met1 the chain carries N-acetylmethionine. A Phosphoserine modification is found at Ser4. Lys17 participates in a covalent cross-link: Glycyl lysine isopeptide (Lys-Gly) (interchain with G-Cter in SUMO2). ATP-binding positions include Asn90, Asn118, and 146-148 (SSN). Residues Lys154 and Lys155 each participate in a glycyl lysine isopeptide (Lys-Gly) (interchain with G-Cter in SUMO2) cross-link. 159–166 (GRNGYGAK) is an ATP binding site. Position 280 is a phosphothreonine (Thr280). Positions 340–342 (KKK) are interaction with DNA. Lys350 is covalently cross-linked (Glycyl lysine isopeptide (Lys-Gly) (interchain with G-Cter in SUMO2)). Residue 374-376 (QTK) participates in ATP binding. Glycyl lysine isopeptide (Lys-Gly) (interchain with G-Cter in SUMO2) cross-links involve residues Lys384, Lys395, Lys414, Lys416, Lys423, and Lys438. A Toprim domain is found at 453-570 (CTLILTEGDS…SLLRHRFLEE (118 aa)). A Mg(2+)-binding site is contributed by Glu459. Residues Lys464, Lys478, and Lys527 each participate in a glycyl lysine isopeptide (Lys-Gly) (interchain with G-Cter in SUMO2) cross-link. The Mg(2+) site is built by Asp539 and Asp541. Residues Lys582, Lys597, Lys612, Lys620, Lys623, Lys630, Lys637, Lys653, Lys660, and Lys674 each participate in a glycyl lysine isopeptide (Lys-Gly) (interchain with G-Cter in SUMO2) cross-link. Residues 713–1168 (IPSMVDGLKP…TPSDLWKEDL (456 aa)) form the Topo IIA-type catalytic domain. The active-site O-(5'-phospho-DNA)-tyrosine intermediate is Tyr803. The interaction with DNA stretch occupies residues 988–997 (KLQTSLTCNS). A Glycyl lysine isopeptide (Lys-Gly) (interchain with G-Cter in SUMO2) cross-link involves residue Lys1073. Residues 1087–1096 (AWKEAQQKVP) are compositionally biased toward basic and acidic residues. Residues 1087–1120 (AWKEAQQKVPEEEENEENEESESESTSPAAESGP) are disordered. Over residues 1097–1109 (EEEENEENEESES) the composition is skewed to acidic residues. Residues Lys1193 and Lys1201 each participate in a glycyl lysine isopeptide (Lys-Gly) (interchain with G-Cter in SUMO2) cross-link. Ser1210 is modified (phosphoserine). The segment at 1229-1526 (EKKIRRKIKS…YLEESDDDLF (298 aa)) is disordered. Residue Lys1237 forms a Glycyl lysine isopeptide (Lys-Gly) (interchain with G-Cter in SUMO1); alternate linkage. Lys1237 is covalently cross-linked (Glycyl lysine isopeptide (Lys-Gly) (interchain with G-Cter in SUMO2); alternate). Phosphothreonine is present on Thr1244. The span at 1254–1268 (LRQRLEKRQKREPGT) shows a compositional bias: basic and acidic residues. Glycyl lysine isopeptide (Lys-Gly) (interchain with G-Cter in SUMO2) cross-links involve residues Lys1272, Lys1279, and Lys1282. Residues Ser1291, Ser1293, Ser1295, and Ser1298 each carry the phosphoserine modification. A Phosphothreonine modification is found at Thr1323. The span at 1326–1346 (LDSDDDFSGLDEKDEDEDFFP) shows a compositional bias: acidic residues. Ser1328 and Ser1333 each carry phosphoserine. Residue Thr1350 is modified to Phosphothreonine. Residues Lys1359, Lys1363, and Lys1369 each participate in a glycyl lysine isopeptide (Lys-Gly) (interchain with G-Cter in SUMO2) cross-link. Residues Ser1370 and Ser1373 each carry the phosphoserine modification. Residue Lys1381 forms a Glycyl lysine isopeptide (Lys-Gly) (interchain with G-Cter in SUMO2) linkage. Residues Ser1383 and Ser1387 each carry the phosphoserine modification. The segment covering 1417 to 1427 (TKGQSLTSTAG) has biased composition (polar residues). Lys1418 participates in a covalent cross-link: Glycyl lysine isopeptide (Lys-Gly) (interchain with G-Cter in SUMO2); alternate. The residue at position 1418 (Lys1418) is an N6-acetyllysine; alternate. The interaction with PLSCR1 stretch occupies residues 1429 to 1435 (KKRAVPK). A Glycyl lysine isopeptide (Lys-Gly) (interchain with G-Cter in SUMO2); alternate cross-link involves residue Lys1438. Lys1438 bears the N6-acetyllysine; alternate mark. Residues Lys1450 and Lys1455 each participate in a glycyl lysine isopeptide (Lys-Gly) (interchain with G-Cter in SUMO2) cross-link. Phosphoserine occurs at positions 1465, 1467, 1470, and 1472. Residues Lys1480 and Lys1488 each participate in a glycyl lysine isopeptide (Lys-Gly) (interchain with G-Cter in SUMO2) cross-link. Basic and acidic residues predominate over residues 1487–1498 (LKGEERDFHVDL). At Ser1521 the chain carries Phosphoserine.

It belongs to the type II topoisomerase family. As to quaternary structure, homodimer. Interacts with COPS5. Interacts with RECQL5; this stimulates DNA decatenation. Interacts with SETMAR; stimulates the topoisomerase activity. Interacts with DHX9; this interaction occurs in a E2 enzyme UBE2I- and RNA-dependent manner, negatively regulates DHX9-mediated double-stranded DNA and RNA duplex helicase activity and stimulates TOP2A-mediated supercoiled DNA relaxation activity. Interacts with HNRNPU (via C-terminus); this interaction protects the topoisomerase TOP2A from degradation and positively regulates the relaxation of supercoiled DNA in a RNA-dependent manner. Interacts with MCM3AP. Interacts with ERCC6. Interacts with PLSCR1. Interacts with GCNA; this interaction allows the resolution of topoisomerase II (TOP2A) DNA-protein cross-links. Interacts with POL1RA/RPA1 (via dock II) and UBTF in the context of Pol I complex; may assist Pol I transcription initiation by releasing supercoils occurring during DNA unwinding. Interacts with TPRN; TPRN interacts with a number of DNA damage response proteins, is recruited to sites of DNA damage and may play a role in DNA damage repair. Requires Mg(2+) as cofactor. The cofactor is Mn(2+). Ca(2+) is required as a cofactor. In terms of processing, phosphorylation has no effect on catalytic activity.

The protein resides in the cytoplasm. It localises to the nucleus. The protein localises to the nucleoplasm. It is found in the nucleolus. The catalysed reaction is ATP-dependent breakage, passage and rejoining of double-stranded DNA.. Its function is as follows. Key decatenating enzyme that alters DNA topology by binding to two double-stranded DNA molecules, generating a double-stranded break in one of the strands, passing the intact strand through the broken strand, and religating the broken strand. May play a role in regulating the period length of BMAL1 transcriptional oscillation. This is DNA topoisomerase 2-alpha (Top2a) from Rattus norvegicus (Rat).